A 56-amino-acid polypeptide reads, in one-letter code: PI-stichotoxin-Hcr2o (56 aa).

Residues 4–54 (CLEPKVVGPCKARIRRFYFDSETGKCTPFIYGGCGGNGNNFETLHACRAIC) enclose the BPTI/Kunitz inhibitor domain. 3 disulfide bridges follow: C4-C54, C13-C37, and C29-C50.

It belongs to the venom Kunitz-type family. Sea anemone type 2 potassium channel toxin subfamily.

It localises to the secreted. Its subcellular location is the nematocyst. Functionally, this recombinant serine protease inhibitor inhibits both trypsin (Ki=21 nM) and chymotrypsin (Ki=500 nM). It possesses anti-inflammatory activity in vitro. It inhibits macrophage LPS-induced nitric oxide synthesis, and blocks histamine influence on intracellular calcium concentration in murine bone marrow-derived macrophages, which can indicate inhibition of H1-histamine receptor (HRH1). In vitro, it shows cytoprotective activity in the oxidative stress agent 6-hydroxydopamine (6-OHDA)-induced neurotoxicity model. In this model, it decreases reactive oxygen species (ROS) levels, and increases cell viability in a correlated manner. It is possible that the observed effect is due to the ability of this peptides to act as free-radical scavenger. In vivo, it shows analgesic activity, since it increases hot plate and tail flick withdrawal latencies, when using a mice thermal pain stimulation model. The chain is PI-stichotoxin-Hcr2o from Radianthus crispa (Leathery sea anemone).